A 280-amino-acid polypeptide reads, in one-letter code: Bifunctional protein FolD (280 aa).

NADP(+) contacts are provided by residues 166–168 (GRS) and serine 191.

This sequence belongs to the tetrahydrofolate dehydrogenase/cyclohydrolase family. As to quaternary structure, homodimer.

It carries out the reaction (6R)-5,10-methylene-5,6,7,8-tetrahydrofolate + NADP(+) = (6R)-5,10-methenyltetrahydrofolate + NADPH. The catalysed reaction is (6R)-5,10-methenyltetrahydrofolate + H2O = (6R)-10-formyltetrahydrofolate + H(+). It participates in one-carbon metabolism; tetrahydrofolate interconversion. Its function is as follows. Catalyzes the oxidation of 5,10-methylenetetrahydrofolate to 5,10-methenyltetrahydrofolate and then the hydrolysis of 5,10-methenyltetrahydrofolate to 10-formyltetrahydrofolate. The protein is Bifunctional protein FolD of Teredinibacter turnerae (strain ATCC 39867 / T7901).